We begin with the raw amino-acid sequence, 186 residues long: Small ribosomal subunit protein uS19 (186 aa).

Residues Met1–Gln95 form a unknown region. A small ribosomal subunit protein uS19 region spans residues Met96–Lys186.

Belongs to the universal ribosomal protein uS19 family.

Functionally, protein S19 forms a complex with S13 that binds strongly to the 16S ribosomal RNA. This chain is Small ribosomal subunit protein uS19, found in Aquifex aeolicus (strain VF5).